We begin with the raw amino-acid sequence, 279 residues long: Very long chain fatty acid elongase 1 (279 aa).

Met1 is subject to N-acetylmethionine. A run of 7 helical transmembrane segments spans residues 23–43 (PLMG…YFVL), 61–81 (FMIV…YEFL), 110–130 (VAWL…IFIL), 137–154 (VTFL…SWWW), 176–196 (VIMY…PYLW), 201–221 (MTAI…QYYF), and 231–251 (VIIH…SNFW). The Di-lysine motif motif lies at 275–279 (KVKAN).

This sequence belongs to the ELO family. ELOVL1 subfamily. In terms of assembly, interacts with LASS2 and HSD17B12. Interacts with TECR. As to expression, ubiquitous.

It localises to the endoplasmic reticulum membrane. The enzyme catalyses a very-long-chain acyl-CoA + malonyl-CoA + H(+) = a very-long-chain 3-oxoacyl-CoA + CO2 + CoA. It carries out the reaction eicosanoyl-CoA + malonyl-CoA + H(+) = 3-oxodocosanoyl-CoA + CO2 + CoA. The catalysed reaction is (11Z)-eicosenoyl-CoA + malonyl-CoA + H(+) = 3-oxo-(13Z)-docosenoyl-CoA + CO2 + CoA. It catalyses the reaction docosanoyl-CoA + malonyl-CoA + H(+) = 3-oxotetracosanoyl-CoA + CO2 + CoA. The enzyme catalyses (13Z)-docosenoyl-CoA + malonyl-CoA + H(+) = 3-oxo-(15Z)-tetracosenoyl-CoA + CO2 + CoA. It carries out the reaction tetracosanoyl-CoA + malonyl-CoA + H(+) = 3-oxohexacosanoyl-CoA + CO2 + CoA. The catalysed reaction is hexacosanoyl-CoA + malonyl-CoA + H(+) = 3-oxooctacosanyol-CoA + CO2 + CoA. It catalyses the reaction octadecanoyl-CoA + malonyl-CoA + H(+) = 3-oxoeicosanoyl-CoA + CO2 + CoA. It functions in the pathway lipid metabolism; fatty acid biosynthesis. Catalyzes the first and rate-limiting reaction of the four reactions that constitute the long-chain fatty acids elongation cycle. This endoplasmic reticulum-bound enzymatic process allows the addition of 2 carbons to the chain of long- and very long-chain fatty acids (VLCFAs) per cycle. Condensing enzyme that exhibits activity toward saturated and monounsaturated acyl-CoA substrates, with the highest activity towards C22:0 acyl-CoA. May participate in the production of both saturated and monounsaturated VLCFAs of different chain lengths that are involved in multiple biological processes as precursors of membrane lipids and lipid mediators. Important for saturated C24:0 and monounsaturated C24:1 sphingolipid synthesis. Indirectly inhibits RPE65 via production of VLCFAs. The sequence is that of Very long chain fatty acid elongase 1 from Homo sapiens (Human).